The sequence spans 611 residues: Mitochondrial import receptor subunit TOM70 (611 aa).

Ala2 is subject to N-acetylalanine. The Mitochondrial intermembrane segment spans residues 2 to 41 (AASKPIEAAMAAAAAPGSGNGVGGGGGTAGPGSGAGTLPR). A helical membrane pass occupies residues 42–62 (WHVALAIGAPLLLGAGAMYLW). The Cytoplasmic segment spans residues 63 to 611 (SRRRRRREAG…KKYGLKPPTL (549 aa)). Residues 69–110 (REAGGRGDASGLKRNSERKTPEGRASPALGSGHHDGSGDSLE) are disordered. At Arg74 the chain carries Omega-N-methylarginine. A phosphoserine mark is found at Ser94, Ser99, Ser105, Ser108, and Ser113. 2 TPR repeats span residues 117 to 150 (AQAA…CPTE) and 156 to 189 (STFY…NPKY). Lys188 bears the N6-acetyllysine mark. Lys278 participates in a covalent cross-link: Glycyl lysine isopeptide (Lys-Gly) (interchain with G-Cter in SUMO2). 8 TPR repeats span residues 297-330 (ENSG…QGKY), 332-365 (AEAL…KEAN), 370-403 (ANAL…DPMN), 404-437 (SDVY…RPKF), 445-478 (CFAL…FPRC), 479-512 (AEGY…EPDN), 514-547 (TTYV…DNKC), and 548-581 (DFAY…AKSE).

This sequence belongs to the Tom70 family. As to quaternary structure, forms part of the preprotein translocase complex of the outer mitochondrial membrane (TOM complex) which consists of at least 7 different proteins (TOMM5, TOMM6, TOMM7, TOMM20, TOMM22, TOMM40 and TOMM70). Interacts with CAPN8. Interacts with TRADD, TRAF6 and STING. Interacts with MAVS. Interacts with HSPA8 and HSP90AA1; both interactions are required for preprotein mitochondrial import. The interaction with HSP90AA1 is direct and mediates the association of TOMM70 with IRF3 and TBK1. Upon mitochondrial depolarization, interacts with PINK1; the interaction is required for PINK1-TOM-TIM23 supercomplex formation which is critical for PINK1 stabilization at the outer mitochondrial membrane, kinase activation and downstream mitophagy. Expressed in the base region of the oxyntic and pyloric mucosae.

Its subcellular location is the mitochondrion outer membrane. Acts as a receptor of the preprotein translocase complex of the outer mitochondrial membrane (TOM complex). Recognizes and mediates the translocation of mitochondrial preproteins from the cytosol into the mitochondria in a chaperone dependent manner. Mediates TBK1 and IRF3 activation induced by MAVS in response to virus infection and promotes host antiviral responses during virus infection. The sequence is that of Mitochondrial import receptor subunit TOM70 from Mus musculus (Mouse).